Here is a 1408-residue protein sequence, read N- to C-terminus: DNA-directed RNA polymerase subunit beta' (1408 aa).

Zn(2+) contacts are provided by Cys-70, Cys-72, Cys-85, and Cys-88. Mg(2+)-binding residues include Asp-460, Asp-462, and Asp-464. Cys-814, Cys-888, Cys-895, and Cys-898 together coordinate Zn(2+).

This sequence belongs to the RNA polymerase beta' chain family. The RNAP catalytic core consists of 2 alpha, 1 beta, 1 beta' and 1 omega subunit. When a sigma factor is associated with the core the holoenzyme is formed, which can initiate transcription. The cofactor is Mg(2+). It depends on Zn(2+) as a cofactor.

The catalysed reaction is RNA(n) + a ribonucleoside 5'-triphosphate = RNA(n+1) + diphosphate. Its function is as follows. DNA-dependent RNA polymerase catalyzes the transcription of DNA into RNA using the four ribonucleoside triphosphates as substrates. The polypeptide is DNA-directed RNA polymerase subunit beta' (Shewanella frigidimarina (strain NCIMB 400)).